The primary structure comprises 382 residues: Histone acetyltransferase type B subunit 2 (382 aa).

5 WD repeats span residues 98-138 (ENNA…RYSH), 141-181 (PHTK…TTFK), 184-224 (IQKD…VVSQ), 228-268 (ESSN…ENSG), and 275-315 (GHSE…EEQQ). The tract at residues 317–321 (EDAED) is interaction with the histone H4 N-terminus. The stretch at 332–372 (GHTAGVSDLSWCPFKDWMIGSVADDNIVHLWEISKKLITNE) is one WD 6 repeat.

This sequence belongs to the WD repeat RBAP46/RBAP48/MSI1 family. In terms of assembly, component of the HAT-B complex composed of at least HAT1 and HAT2. The HAT-B complex binds to histone H4 tail.

The protein resides in the cytoplasm. The protein localises to the nucleus. Functionally, regulatory subunit of the histone acetylase B (HAT-B) complex. The complex acetylates 'Lys-14' of histone H4 which is required for telomeric silencing. This Candida albicans (strain SC5314 / ATCC MYA-2876) (Yeast) protein is Histone acetyltransferase type B subunit 2 (HAT2).